The chain runs to 382 residues: Galactokinase (382 aa).

34–37 (EHTD) provides a ligand contact to substrate. 124-130 (GAGLSSS) provides a ligand contact to ATP. The Mg(2+) site is built by Ser130 and Glu162. Catalysis depends on Asp174, which acts as the Proton acceptor. Tyr223 contributes to the substrate binding site.

It belongs to the GHMP kinase family. GalK subfamily.

The protein resides in the cytoplasm. The catalysed reaction is alpha-D-galactose + ATP = alpha-D-galactose 1-phosphate + ADP + H(+). Its pathway is carbohydrate metabolism; galactose metabolism. In terms of biological role, catalyzes the transfer of the gamma-phosphate of ATP to D-galactose to form alpha-D-galactose-1-phosphate (Gal-1-P). The polypeptide is Galactokinase (Salmonella heidelberg (strain SL476)).